Here is a 382-residue protein sequence, read N- to C-terminus: Probable purine permease 4 (382 aa).

10 helical membrane-spanning segments follow: residues Leu25–Leu45, Trp62–Leu82, Leu98–Gly118, Tyr121–Leu141, Ile150–Leu170, Tyr185–Val205, Leu224–Phe244, Thr260–Ala280, Ile291–Ala311, and Val315–Thr335. One can recognise an EamA domain in the interval Ala66–Leu170. Positions Glu345–Met364 are disordered.

This sequence belongs to the purine permeases (TC 2.A.7.14) family.

The protein resides in the membrane. The sequence is that of Probable purine permease 4 (PUP4) from Arabidopsis thaliana (Mouse-ear cress).